The sequence spans 232 residues: 7-cyano-7-deazaguanine synthase (232 aa).

Residue 8–18 coordinates ATP; the sequence is FSGGQDSTTCL. 4 residues coordinate Zn(2+): Cys-187, Cys-196, Cys-199, and Cys-202.

The protein belongs to the QueC family. Requires Zn(2+) as cofactor.

It catalyses the reaction 7-carboxy-7-deazaguanine + NH4(+) + ATP = 7-cyano-7-deazaguanine + ADP + phosphate + H2O + H(+). The protein operates within purine metabolism; 7-cyano-7-deazaguanine biosynthesis. In terms of biological role, catalyzes the ATP-dependent conversion of 7-carboxy-7-deazaguanine (CDG) to 7-cyano-7-deazaguanine (preQ(0)). The sequence is that of 7-cyano-7-deazaguanine synthase from Vibrio parahaemolyticus serotype O3:K6 (strain RIMD 2210633).